The following is a 399-amino-acid chain: Phosphoglycerate kinase (399 aa).

Substrate contacts are provided by residues 24–26 (DLN), R41, 64–67 (HLGR), R123, and R160. ATP contacts are provided by residues K210, G298, E329, and 355–358 (GGDS).

Belongs to the phosphoglycerate kinase family. As to quaternary structure, monomer.

Its subcellular location is the cytoplasm. The catalysed reaction is (2R)-3-phosphoglycerate + ATP = (2R)-3-phospho-glyceroyl phosphate + ADP. It participates in carbohydrate degradation; glycolysis; pyruvate from D-glyceraldehyde 3-phosphate: step 2/5. The chain is Phosphoglycerate kinase from Salinispora tropica (strain ATCC BAA-916 / DSM 44818 / JCM 13857 / NBRC 105044 / CNB-440).